The following is a 690-amino-acid chain: Protein arginine N-methyltransferase 7 (690 aa).

2 consecutive SAM-dependent MTase PRMT-type domains span residues 5–355 and 364–690; these read FQDS…FSLW and KEPL…EEEQ.

This sequence belongs to the class I-like SAM-binding methyltransferase superfamily. Protein arginine N-methyltransferase family. PRMT7 subfamily.

In terms of biological role, essential arginine methyltransferase that can both catalyze the formation of omega-N monomethylarginine (MMA) and symmetrical dimethylarginine (sDMA). Specifically mediates the symmetrical dimethylation of arginine residues in the small nuclear ribonucleoproteins SmD1 and SmD3. The polypeptide is Protein arginine N-methyltransferase 7 (Art7) (Anopheles gambiae (African malaria mosquito)).